The sequence spans 331 residues: Glutamyl-Q tRNA(Asp) synthetase (331 aa).

The segment covering 1 to 30 has biased composition (polar residues); it reads MVQQAVIQRSANQQLSNQRSANQRATNQPT. The segment at 1–36 is disordered; the sequence is MVQQAVIQRSANQQLSNQRSANQRATNQPTEYVGRF. Residues 35–39 and glutamate 71 each bind L-glutamate; that span reads RFAPS. A 'HIGH' region motif is present at residues 38 to 48; that stretch reads PSPSGDLHFGS. The Zn(2+) site is built by cysteine 127, cysteine 129, tyrosine 141, and cysteine 145. L-glutamate-binding residues include tyrosine 198 and arginine 216. The 'KMSKS' region motif lies at 254-258; sequence KLSKQ. Lysine 257 serves as a coordination point for ATP.

Belongs to the class-I aminoacyl-tRNA synthetase family. GluQ subfamily. It depends on Zn(2+) as a cofactor.

Functionally, catalyzes the tRNA-independent activation of glutamate in presence of ATP and the subsequent transfer of glutamate onto a tRNA(Asp). Glutamate is transferred on the 2-amino-5-(4,5-dihydroxy-2-cyclopenten-1-yl) moiety of the queuosine in the wobble position of the QUC anticodon. The chain is Glutamyl-Q tRNA(Asp) synthetase from Yersinia pseudotuberculosis serotype I (strain IP32953).